The chain runs to 905 residues: DNA mismatch repair protein MutS (905 aa).

Residues 388–410 (LERPANPEGTYPTDAETSGDTLP) are disordered. Residue 638–645 (GPNMAGKS) participates in ATP binding. Residues 826–847 (RDAARGTNSAPSRQTLPGLDLP) form a disordered region. Positions 831–840 (GTNSAPSRQT) are enriched in polar residues.

The protein belongs to the DNA mismatch repair MutS family.

Its function is as follows. This protein is involved in the repair of mismatches in DNA. It is possible that it carries out the mismatch recognition step. This protein has a weak ATPase activity. The chain is DNA mismatch repair protein MutS from Nitratidesulfovibrio vulgaris (strain DP4) (Desulfovibrio vulgaris).